Reading from the N-terminus, the 635-residue chain is Biosynthetic arginine decarboxylase (635 aa).

Lys100 carries the post-translational modification N6-(pyridoxal phosphate)lysine. 282–292 serves as a coordination point for substrate; sequence IDIGGGLGVDY.

It belongs to the Orn/Lys/Arg decarboxylase class-II family. SpeA subfamily. Mg(2+) is required as a cofactor. Pyridoxal 5'-phosphate serves as cofactor.

It carries out the reaction L-arginine + H(+) = agmatine + CO2. Its pathway is amine and polyamine biosynthesis; agmatine biosynthesis; agmatine from L-arginine: step 1/1. Functionally, catalyzes the biosynthesis of agmatine from arginine. This Pelobacter propionicus (strain DSM 2379 / NBRC 103807 / OttBd1) protein is Biosynthetic arginine decarboxylase.